Reading from the N-terminus, the 212-residue chain is ATP-dependent Clp protease proteolytic subunit (212 aa).

The active-site Nucleophile is Ser-113. Residue His-138 is part of the active site.

It belongs to the peptidase S14 family. In terms of assembly, fourteen ClpP subunits assemble into 2 heptameric rings which stack back to back to give a disk-like structure with a central cavity, resembling the structure of eukaryotic proteasomes.

It localises to the cytoplasm. The catalysed reaction is Hydrolysis of proteins to small peptides in the presence of ATP and magnesium. alpha-casein is the usual test substrate. In the absence of ATP, only oligopeptides shorter than five residues are hydrolyzed (such as succinyl-Leu-Tyr-|-NHMec, and Leu-Tyr-Leu-|-Tyr-Trp, in which cleavage of the -Tyr-|-Leu- and -Tyr-|-Trp bonds also occurs).. Cleaves peptides in various proteins in a process that requires ATP hydrolysis. Has a chymotrypsin-like activity. Plays a major role in the degradation of misfolded proteins. The chain is ATP-dependent Clp protease proteolytic subunit from Saccharophagus degradans (strain 2-40 / ATCC 43961 / DSM 17024).